The following is a 107-amino-acid chain: Putative ankyrin repeat protein RP714 (107 aa).

ANK repeat units follow at residues 7–36 (PPLS…DIDV), 40–69 (NGNS…TIDA), and 73–102 (ELAT…NKSA).

The chain is Putative ankyrin repeat protein RP714 from Rickettsia prowazekii (strain Madrid E).